The primary structure comprises 235 residues: Probable queuosine precursor transporter (235 aa).

Helical transmembrane passes span isoleucine 17 to isoleucine 37, phenylalanine 56 to valine 76, isoleucine 87 to serine 107, isoleucine 127 to asparagine 147, tryptophan 155 to phenylalanine 175, and phenylalanine 201 to isoleucine 221.

This sequence belongs to the vitamin uptake transporter (VUT/ECF) (TC 2.A.88) family. Q precursor transporter subfamily.

The protein resides in the cell inner membrane. Functionally, involved in the import of queuosine (Q) precursors, required for Q precursor salvage. The polypeptide is Probable queuosine precursor transporter (Haemophilus influenzae (strain ATCC 51907 / DSM 11121 / KW20 / Rd)).